We begin with the raw amino-acid sequence, 207 residues long: Guanylate kinase (207 aa).

In terms of domain architecture, Guanylate kinase-like spans 4–184; that stretch reads GTLYIVSAPS…ALSDLKTIIR (181 aa). 11–18 is a binding site for ATP; that stretch reads APSGAGKS.

The protein belongs to the guanylate kinase family.

The protein resides in the cytoplasm. The catalysed reaction is GMP + ATP = GDP + ADP. In terms of biological role, essential for recycling GMP and indirectly, cGMP. The polypeptide is Guanylate kinase (gmk) (Salmonella typhimurium (strain LT2 / SGSC1412 / ATCC 700720)).